The primary structure comprises 650 residues: 1-deoxy-D-xylulose-5-phosphate synthase 2 (650 aa).

Residues H79 and 120-122 contribute to the thiamine diphosphate site; that span reads AHS. Residue D151 participates in Mg(2+) binding. Residues 152–153, N180, Y289, and E371 each bind thiamine diphosphate; that span reads GS. Residue N180 participates in Mg(2+) binding.

It belongs to the transketolase family. DXPS subfamily. In terms of assembly, homodimer. Mg(2+) serves as cofactor. Requires thiamine diphosphate as cofactor.

It catalyses the reaction D-glyceraldehyde 3-phosphate + pyruvate + H(+) = 1-deoxy-D-xylulose 5-phosphate + CO2. It participates in metabolic intermediate biosynthesis; 1-deoxy-D-xylulose 5-phosphate biosynthesis; 1-deoxy-D-xylulose 5-phosphate from D-glyceraldehyde 3-phosphate and pyruvate: step 1/1. Its function is as follows. Catalyzes the acyloin condensation reaction between C atoms 2 and 3 of pyruvate and glyceraldehyde 3-phosphate to yield 1-deoxy-D-xylulose-5-phosphate (DXP). This chain is 1-deoxy-D-xylulose-5-phosphate synthase 2, found in Zymomonas mobilis subsp. mobilis (strain ATCC 31821 / ZM4 / CP4).